Reading from the N-terminus, the 886-residue chain is Putative leucine-rich repeat receptor-like serine/threonine-protein kinase At2g14440 (886 aa).

Positions 1–23 (METRSKLMLLACATFSIISLVKS) are cleaved as a signal peptide. Topologically, residues 24–528 (QNQQGFISLY…KHQPKSWLVA (505 aa)) are extracellular. N-linked (GlcNAc...) asparagine glycosylation is found at N49, N69, N232, N236, N259, N292, N434, N447, N458, and N471. 4 LRR repeats span residues 413-436 (RIISLDLSSSGLTGVITPSIQNLT), 437-460 (MLRELDLSNNNLTGVIPPSLQNLT), 461-483 (MLRELDLSNNNLTGEVPEFLATI), and 485-507 (PLLVIHLRGNNLRGSVPQALQDR). Residues 529 to 549 (IVASISCVAVTIIVLVLIFIF) form a helical membrane-spanning segment. Residues 550–886 (RRRKSSTRKV…TFISDIPSAR (337 aa)) are Cytoplasmic-facing. The Protein kinase domain occupies 581 to 850 (NNFEVVLGKG…NMTRVAHELN (270 aa)). ATP contacts are provided by residues 587–595 (LGKGGFGVV) and K608. Y653 is modified (phosphotyrosine). The active-site Proton acceptor is D705. S739 is modified (phosphoserine). Phosphothreonine occurs at positions 740 and 745. Y753 is subject to Phosphotyrosine. Residues 863-886 (SQDQNSSKSSGHTVTFISDIPSAR) are disordered. Positions 865 to 878 (DQNSSKSSGHTVTF) are enriched in polar residues.

This sequence belongs to the protein kinase superfamily. Ser/Thr protein kinase family.

The protein resides in the cell membrane. It catalyses the reaction L-seryl-[protein] + ATP = O-phospho-L-seryl-[protein] + ADP + H(+). The catalysed reaction is L-threonyl-[protein] + ATP = O-phospho-L-threonyl-[protein] + ADP + H(+). This is Putative leucine-rich repeat receptor-like serine/threonine-protein kinase At2g14440 from Arabidopsis thaliana (Mouse-ear cress).